Reading from the N-terminus, the 201-residue chain is Segregation and condensation protein B (201 aa).

It belongs to the ScpB family. In terms of assembly, homodimer. Homodimerization may be required to stabilize the binding of ScpA to the Smc head domains. Component of a cohesin-like complex composed of ScpA, ScpB and the Smc homodimer, in which ScpA and ScpB bind to the head domain of Smc. The presence of the three proteins is required for the association of the complex with DNA.

The protein resides in the cytoplasm. Functionally, participates in chromosomal partition during cell division. May act via the formation of a condensin-like complex containing Smc and ScpA that pull DNA away from mid-cell into both cell halves. In Enterococcus faecalis (strain ATCC 700802 / V583), this protein is Segregation and condensation protein B.